Reading from the N-terminus, the 599-residue chain is Beta-(1--&gt;2)glucan export ATP-binding/permease protein NdvA (599 aa).

One can recognise an ABC transmembrane type-1 domain in the interval 21–301 (TITMCVASVL…ISAFINQTVT (281 aa)). 5 consecutive transmembrane segments (helical) span residues 22–42 (ITMC…PVLF), 55–75 (IFSP…AAVF), 156–176 (MRMS…GQLV), 248–268 (MAST…VTKG), and 276–296 (IAFI…SAFI). The ABC transporter domain occupies 335-569 (IVFDNVTYEF…GGRFSDLLRA (235 aa)). 368–375 (GPTGAGKT) contributes to the ATP binding site.

Belongs to the ABC transporter superfamily. Beta-(1--&gt;2)glucan exporter (TC 3.A.1.108.1) family. In terms of assembly, homodimer.

The protein resides in the cell inner membrane. The catalysed reaction is [(1-&gt;2)-beta-D-glucosyl](n)(in) + ATP + H2O = [(1-&gt;2)-beta-D-glucosyl](n)(out) + ADP + phosphate + H(+). Its function is as follows. Involved in beta-(1--&gt;2)glucan export. Transmembrane domains (TMD) form a pore in the inner membrane and the ATP-binding domain (NBD) is responsible for energy generation. The sequence is that of Beta-(1--&gt;2)glucan export ATP-binding/permease protein NdvA from Brucella melitensis biotype 1 (strain ATCC 23456 / CCUG 17765 / NCTC 10094 / 16M).